We begin with the raw amino-acid sequence, 445 residues long: Ribosomal protein uS12 methylthiotransferase RimO (445 aa).

The 116-residue stretch at 4 to 119 (LKFGLVSLGC…LDDAIEDFFN (116 aa)) folds into the MTTase N-terminal domain. [4Fe-4S] cluster contacts are provided by cysteine 13, cysteine 48, cysteine 82, cysteine 156, cysteine 160, and cysteine 163. A Radical SAM core domain is found at 142–372 (TTGEYSSYVR…MLIQQQVSKN (231 aa)). Positions 375–441 (AKKIGKVYKV…EYDLIGVVYN (67 aa)) constitute a TRAM domain.

The protein belongs to the methylthiotransferase family. RimO subfamily. [4Fe-4S] cluster serves as cofactor.

It is found in the cytoplasm. It catalyses the reaction L-aspartate(89)-[ribosomal protein uS12]-hydrogen + (sulfur carrier)-SH + AH2 + 2 S-adenosyl-L-methionine = 3-methylsulfanyl-L-aspartate(89)-[ribosomal protein uS12]-hydrogen + (sulfur carrier)-H + 5'-deoxyadenosine + L-methionine + A + S-adenosyl-L-homocysteine + 2 H(+). Functionally, catalyzes the methylthiolation of an aspartic acid residue of ribosomal protein uS12. The polypeptide is Ribosomal protein uS12 methylthiotransferase RimO (Clostridium acetobutylicum (strain ATCC 824 / DSM 792 / JCM 1419 / IAM 19013 / LMG 5710 / NBRC 13948 / NRRL B-527 / VKM B-1787 / 2291 / W)).